The chain runs to 590 residues: DEAD-box ATP-dependent RNA helicase 27 (590 aa).

Positions 1 to 92 are disordered; it reads MAPAPATTSS…EKGNEGGSGI (92 aa). The span at 27–62 shows a compositional bias: acidic residues; the sequence is SDSESEELSYDTAAADEEEGEEEAPNQMEELEEEQE. A coiled-coil region spans residues 40–87; it reads AADEEEGEEEAPNQMEELEEEQEEEKKEKKQKKEMSKEKKRKKEKGNE. A compositionally biased stretch (basic and acidic residues) spans 63–76; the sequence is EEKKEKKQKKEMSK. The Q motif motif lies at 96 to 124; it reads MLFSELGVSEPTARAIREMNYTYLTQIQA. One can recognise a Helicase ATP-binding domain in the interval 127–302; sequence IPHLLNGKDV…KLSFEKNEES (176 aa). Position 140–147 (140–147) interacts with ATP; that stretch reads AKTGSGKT. The DEAD box signature appears at 250-253; sequence DEAD. In terms of domain architecture, Helicase C-terminal spans 335 to 488; sequence RFLVLYAFLK…NKVPNLQSHL (154 aa). Positions 551–590 are disordered; sequence SASKHRRKMRKVDGGRRHGISAANPYGRKGGDDKRQFARF. Positions 579 to 590 are enriched in basic and acidic residues; the sequence is KGGDDKRQFARF.

Belongs to the DEAD box helicase family. DDX18/HAS1 subfamily.

The enzyme catalyses ATP + H2O = ADP + phosphate + H(+). This chain is DEAD-box ATP-dependent RNA helicase 27, found in Oryza sativa subsp. japonica (Rice).